Reading from the N-terminus, the 816-residue chain is Leucine--tRNA ligase (816 aa).

A 'HIGH' region motif is present at residues 40–51; sequence SYPSGSQLHAGH. The 'KMSKS' region signature appears at 576 to 580; sequence KMSKS. Residue K579 participates in ATP binding.

It belongs to the class-I aminoacyl-tRNA synthetase family.

It localises to the cytoplasm. It catalyses the reaction tRNA(Leu) + L-leucine + ATP = L-leucyl-tRNA(Leu) + AMP + diphosphate. This is Leucine--tRNA ligase from Clostridium perfringens (strain SM101 / Type A).